The primary structure comprises 704 residues: Fatty acid oxidation complex subunit alpha (704 aa).

The interval 1–190 (MSEQKAFSLK…KLGVVDACVP (190 aa)) is enoyl-CoA hydratase. Residues 308–704 (TAVNKVGVLG…RAGEGRNFYD (397 aa)) are 3-hydroxyacyl-CoA dehydrogenase.

The protein in the N-terminal section; belongs to the enoyl-CoA hydratase/isomerase family. In the central section; belongs to the 3-hydroxyacyl-CoA dehydrogenase family. As to quaternary structure, heterotetramer of two alpha chains (FadJ) and two beta chains (FadI).

The protein localises to the cytoplasm. The catalysed reaction is a (3S)-3-hydroxyacyl-CoA = a (2E)-enoyl-CoA + H2O. It catalyses the reaction a 4-saturated-(3S)-3-hydroxyacyl-CoA = a (3E)-enoyl-CoA + H2O. It carries out the reaction a (3S)-3-hydroxyacyl-CoA + NAD(+) = a 3-oxoacyl-CoA + NADH + H(+). The enzyme catalyses (3S)-3-hydroxybutanoyl-CoA = (3R)-3-hydroxybutanoyl-CoA. The protein operates within lipid metabolism; fatty acid beta-oxidation. Catalyzes the formation of a hydroxyacyl-CoA by addition of water on enoyl-CoA. Also exhibits 3-hydroxyacyl-CoA epimerase and 3-hydroxyacyl-CoA dehydrogenase activities. The sequence is that of Fatty acid oxidation complex subunit alpha from Vibrio campbellii (strain ATCC BAA-1116).